We begin with the raw amino-acid sequence, 452 residues long: Probable phosphoglucosamine mutase (452 aa).

The Phosphoserine intermediate role is filled by Ser-96. Mg(2+) is bound by residues Ser-96, Asp-235, Asp-237, and Asp-239. Residue Ser-96 is modified to Phosphoserine.

The protein belongs to the phosphohexose mutase family. Requires Mg(2+) as cofactor. Post-translationally, activated by phosphorylation.

The enzyme catalyses alpha-D-glucosamine 1-phosphate = D-glucosamine 6-phosphate. Its function is as follows. Catalyzes the conversion of glucosamine-6-phosphate to glucosamine-1-phosphate. The polypeptide is Probable phosphoglucosamine mutase (Methanopyrus kandleri (strain AV19 / DSM 6324 / JCM 9639 / NBRC 100938)).